Reading from the N-terminus, the 571-residue chain is Proline--tRNA ligase (571 aa).

It belongs to the class-II aminoacyl-tRNA synthetase family. ProS type 1 subfamily. Homodimer.

The protein localises to the cytoplasm. It catalyses the reaction tRNA(Pro) + L-proline + ATP = L-prolyl-tRNA(Pro) + AMP + diphosphate. Its function is as follows. Catalyzes the attachment of proline to tRNA(Pro) in a two-step reaction: proline is first activated by ATP to form Pro-AMP and then transferred to the acceptor end of tRNA(Pro). As ProRS can inadvertently accommodate and process non-cognate amino acids such as alanine and cysteine, to avoid such errors it has two additional distinct editing activities against alanine. One activity is designated as 'pretransfer' editing and involves the tRNA(Pro)-independent hydrolysis of activated Ala-AMP. The other activity is designated 'posttransfer' editing and involves deacylation of mischarged Ala-tRNA(Pro). The misacylated Cys-tRNA(Pro) is not edited by ProRS. The sequence is that of Proline--tRNA ligase from Pseudomonas fluorescens (strain Pf0-1).